The sequence spans 342 residues: Glycerol-1-phosphate dehydrogenase [NAD(P)+] (342 aa).

NAD(+)-binding positions include 84–88 (GRPID) and 106–109 (TAAS). D111 provides a ligand contact to substrate. NAD(+) is bound at residue S115. A substrate-binding site is contributed by D160. Zn(2+) contacts are provided by D160 and H241. H245 contributes to the substrate binding site. H260 is a Zn(2+) binding site.

The protein belongs to the glycerol-1-phosphate dehydrogenase family. Homodimer. Zn(2+) serves as cofactor.

Its subcellular location is the cytoplasm. The enzyme catalyses sn-glycerol 1-phosphate + NAD(+) = dihydroxyacetone phosphate + NADH + H(+). It catalyses the reaction sn-glycerol 1-phosphate + NADP(+) = dihydroxyacetone phosphate + NADPH + H(+). It participates in membrane lipid metabolism; glycerophospholipid metabolism. Its function is as follows. Catalyzes the NAD(P)H-dependent reduction of dihydroxyacetonephosphate (DHAP or glycerone phosphate) to glycerol 1-phosphate (G1P). The G1P thus generated is used as the glycerophosphate backbone of phospholipids in the cellular membranes of Archaea. This is Glycerol-1-phosphate dehydrogenase [NAD(P)+] from Pyrobaculum aerophilum (strain ATCC 51768 / DSM 7523 / JCM 9630 / CIP 104966 / NBRC 100827 / IM2).